A 321-amino-acid polypeptide reads, in one-letter code: MNKFKNIAVYGGGSFGTSLASLAAQNCNNVTLFLRDEEIAKEILHNKTNVKYLGDIKLPTHLQVTTNLSVIKDFELIIIAVPSYAFDDSIKLLKTHGISADNTLLIATKGFARNPTELFSDRLKTLLPHSTTAFFAGSNLAKELAKNLPASASIASLDIDIANKIANNLSSKTFTTNTTSDIVTLQVAGALKNIFAIKSGIDLAKKQGKNARATLIVTVLKEIAILSKALGGTASSRSLDTNLLLEAGVVGDLVLTCYSLGSRNTKFGYELGISSDKKIFLREYKELVEGQEALKLVLDLIKKYDLQMPIISEVANYVIPE.

S14, F15, R35, and K109 together coordinate NADPH. Sn-glycerol 3-phosphate-binding residues include K109 and G137. A141 contacts NADPH. 5 residues coordinate sn-glycerol 3-phosphate: K192, D252, S262, R263, and N264. The active-site Proton acceptor is K192. R263 provides a ligand contact to NADPH. Positions 287 and 289 each coordinate NADPH.

It belongs to the NAD-dependent glycerol-3-phosphate dehydrogenase family.

The protein localises to the cytoplasm. The catalysed reaction is sn-glycerol 3-phosphate + NAD(+) = dihydroxyacetone phosphate + NADH + H(+). It carries out the reaction sn-glycerol 3-phosphate + NADP(+) = dihydroxyacetone phosphate + NADPH + H(+). Its pathway is membrane lipid metabolism; glycerophospholipid metabolism. In terms of biological role, catalyzes the reduction of the glycolytic intermediate dihydroxyacetone phosphate (DHAP) to sn-glycerol 3-phosphate (G3P), the key precursor for phospholipid synthesis. The sequence is that of Glycerol-3-phosphate dehydrogenase [NAD(P)+] from Rickettsia felis (strain ATCC VR-1525 / URRWXCal2) (Rickettsia azadi).